We begin with the raw amino-acid sequence, 339 residues long: Phenylalanine--tRNA ligase alpha subunit (339 aa).

Residue Glu-254 participates in Mg(2+) binding.

Belongs to the class-II aminoacyl-tRNA synthetase family. Phe-tRNA synthetase alpha subunit type 1 subfamily. Tetramer of two alpha and two beta subunits. The cofactor is Mg(2+).

It is found in the cytoplasm. The enzyme catalyses tRNA(Phe) + L-phenylalanine + ATP = L-phenylalanyl-tRNA(Phe) + AMP + diphosphate + H(+). The sequence is that of Phenylalanine--tRNA ligase alpha subunit from Clostridium perfringens (strain ATCC 13124 / DSM 756 / JCM 1290 / NCIMB 6125 / NCTC 8237 / Type A).